The primary structure comprises 651 residues: Acetyl-coenzyme A synthetase (651 aa).

Residues 190 to 193, T309, and N333 each bind CoA; that span reads RGGR. Residues 385-387, 409-414, D498, and R513 contribute to the ATP site; these read GEP and DTWWQT. Residue S521 participates in CoA binding. R524 lines the ATP pocket. Mg(2+)-binding residues include V535, H537, and V540. Position 582 (R582) interacts with CoA. K607 is modified (N6-acetyllysine).

It belongs to the ATP-dependent AMP-binding enzyme family. It depends on Mg(2+) as a cofactor. In terms of processing, acetylated. Deacetylation by the SIR2-homolog deacetylase activates the enzyme.

The catalysed reaction is acetate + ATP + CoA = acetyl-CoA + AMP + diphosphate. Functionally, catalyzes the conversion of acetate into acetyl-CoA (AcCoA), an essential intermediate at the junction of anabolic and catabolic pathways. AcsA undergoes a two-step reaction. In the first half reaction, AcsA combines acetate with ATP to form acetyl-adenylate (AcAMP) intermediate. In the second half reaction, it can then transfer the acetyl group from AcAMP to the sulfhydryl group of CoA, forming the product AcCoA. This is Acetyl-coenzyme A synthetase from Xanthobacter autotrophicus (strain ATCC BAA-1158 / Py2).